A 400-amino-acid polypeptide reads, in one-letter code: MTYQAPDENGFYGKFGGRFVPETLMKAVKELDEAYRASKTDPAFQKELNYYLKEYVGRETPLYFAEQLTAHAGGAKIYLKREDLNHTGAHKINNTIGQALLARQMGKQKVVAETGAGQHGVATATVAALFNMECTIFMGEEDVKRQSLNVFRMELLGAKVVSVKAGSRTLKDAVNEALRFWVANVEDTHYIMGSVLGPHPFPEIVRDYQSVIGIEARKQHLEKEGKLPDAIVACVGGGSNAMGLFYPFVDDVSVQMHGVEAAGHGLETEFHAATISKGEIGILHGAMMDVLQDENGQILEAFSISAGLDYPGIGPEHSFFRDLGRAAYHSVTDDEAVEAFQLLCRTEGIIPALESSHAISYAVKLASQMRPEESMVVCLSGRGDKDVNQLKERLEGQTND.

Lys-91 is modified (N6-(pyridoxal phosphate)lysine).

This sequence belongs to the TrpB family. Tetramer of two alpha and two beta chains. Pyridoxal 5'-phosphate serves as cofactor.

It carries out the reaction (1S,2R)-1-C-(indol-3-yl)glycerol 3-phosphate + L-serine = D-glyceraldehyde 3-phosphate + L-tryptophan + H2O. It participates in amino-acid biosynthesis; L-tryptophan biosynthesis; L-tryptophan from chorismate: step 5/5. The beta subunit is responsible for the synthesis of L-tryptophan from indole and L-serine. This Listeria monocytogenes serotype 4a (strain HCC23) protein is Tryptophan synthase beta chain.